The following is a 240-amino-acid chain: Methylthioribulose-1-phosphate dehydratase (240 aa).

Cys99 contributes to the substrate binding site. The Zn(2+) site is built by His116 and His118. Residue Glu145 is the Proton donor/acceptor of the active site. Position 201 (His201) interacts with Zn(2+).

This sequence belongs to the aldolase class II family. MtnB subfamily. Zn(2+) is required as a cofactor.

It localises to the cytoplasm. The catalysed reaction is 5-(methylsulfanyl)-D-ribulose 1-phosphate = 5-methylsulfanyl-2,3-dioxopentyl phosphate + H2O. It functions in the pathway amino-acid biosynthesis; L-methionine biosynthesis via salvage pathway; L-methionine from S-methyl-5-thio-alpha-D-ribose 1-phosphate: step 2/6. In terms of biological role, catalyzes the dehydration of methylthioribulose-1-phosphate (MTRu-1-P) into 2,3-diketo-5-methylthiopentyl-1-phosphate (DK-MTP-1-P). The sequence is that of Methylthioribulose-1-phosphate dehydratase from Paracoccidioides brasiliensis (strain Pb18).